Consider the following 261-residue polypeptide: Cytochrome c oxidase subunit 3 (261 aa).

At 1–15 (MTHQTHAYHMVNPSP) the chain is on the mitochondrial matrix side. A helical membrane pass occupies residues 16–34 (WPLTGALSALLMTSGLTMW). Topologically, residues 35–40 (FHFNSM) are mitochondrial intermembrane. The helical transmembrane segment at 41 to 66 (LLLSLGLLTNTLTMYQWWRDIIREST) threads the bilayer. Residues 67–72 (FQGHHT) lie on the Mitochondrial matrix side of the membrane. A helical membrane pass occupies residues 73 to 105 (SVVQKGLRYGMILFIISEVLFFTGFFWAFYHSS). Residues 106-128 (LAPTPELGGCWPPTGIHPLNPLE) are Mitochondrial intermembrane-facing. A helical transmembrane segment spans residues 129–152 (VPLLNTSILLASGVSITWAHHSLM). Residues 153 to 155 (EGD) lie on the Mitochondrial matrix side of the membrane. A helical transmembrane segment spans residues 156–183 (RKHMIQALSITIALGVYFTLLQASEYYE). Residues 184–190 (APFTISD) lie on the Mitochondrial intermembrane side of the membrane. A helical transmembrane segment spans residues 191-223 (GVYGSTFFVATGFHGLHVIIGSTFLAVCLLRQL). At 224 to 232 (KFHFTSNHH) the chain is on the mitochondrial matrix side. Residues 233 to 256 (FGFEAAAWYWHFVDVVWLFLYVSI) traverse the membrane as a helical segment. Topologically, residues 257 to 261 (YWWGS) are mitochondrial intermembrane.

This sequence belongs to the cytochrome c oxidase subunit 3 family. As to quaternary structure, component of the cytochrome c oxidase (complex IV, CIV), a multisubunit enzyme composed of 14 subunits. The complex is composed of a catalytic core of 3 subunits MT-CO1, MT-CO2 and MT-CO3, encoded in the mitochondrial DNA, and 11 supernumerary subunits COX4I, COX5A, COX5B, COX6A, COX6B, COX6C, COX7A, COX7B, COX7C, COX8 and NDUFA4, which are encoded in the nuclear genome. The complex exists as a monomer or a dimer and forms supercomplexes (SCs) in the inner mitochondrial membrane with NADH-ubiquinone oxidoreductase (complex I, CI) and ubiquinol-cytochrome c oxidoreductase (cytochrome b-c1 complex, complex III, CIII), resulting in different assemblies (supercomplex SCI(1)III(2)IV(1) and megacomplex MCI(2)III(2)IV(2)).

The protein resides in the mitochondrion inner membrane. The enzyme catalyses 4 Fe(II)-[cytochrome c] + O2 + 8 H(+)(in) = 4 Fe(III)-[cytochrome c] + 2 H2O + 4 H(+)(out). Component of the cytochrome c oxidase, the last enzyme in the mitochondrial electron transport chain which drives oxidative phosphorylation. The respiratory chain contains 3 multisubunit complexes succinate dehydrogenase (complex II, CII), ubiquinol-cytochrome c oxidoreductase (cytochrome b-c1 complex, complex III, CIII) and cytochrome c oxidase (complex IV, CIV), that cooperate to transfer electrons derived from NADH and succinate to molecular oxygen, creating an electrochemical gradient over the inner membrane that drives transmembrane transport and the ATP synthase. Cytochrome c oxidase is the component of the respiratory chain that catalyzes the reduction of oxygen to water. Electrons originating from reduced cytochrome c in the intermembrane space (IMS) are transferred via the dinuclear copper A center (CU(A)) of subunit 2 and heme A of subunit 1 to the active site in subunit 1, a binuclear center (BNC) formed by heme A3 and copper B (CU(B)). The BNC reduces molecular oxygen to 2 water molecules using 4 electrons from cytochrome c in the IMS and 4 protons from the mitochondrial matrix. The protein is Cytochrome c oxidase subunit 3 (MT-CO3) of Sus scrofa (Pig).